Here is a 606-residue protein sequence, read N- to C-terminus: Phosphomethylpyrimidine synthase (606 aa).

Positions 84-103 (EPYPARSVKPEDNGLTSSPI) are disordered. Residues N209, M238, Y267, H303, 323–325 (SRG), 364–367 (DGLR), and E403 contribute to the substrate site. Zn(2+) is bound at residue H407. Y430 contributes to the substrate binding site. H471 is a Zn(2+) binding site. Residues C551, C554, and C559 each coordinate [4Fe-4S] cluster.

Belongs to the ThiC family. Homodimer. [4Fe-4S] cluster is required as a cofactor.

It catalyses the reaction 5-amino-1-(5-phospho-beta-D-ribosyl)imidazole + S-adenosyl-L-methionine = 4-amino-2-methyl-5-(phosphooxymethyl)pyrimidine + CO + 5'-deoxyadenosine + formate + L-methionine + 3 H(+). The protein operates within cofactor biosynthesis; thiamine diphosphate biosynthesis. Functionally, catalyzes the synthesis of the hydroxymethylpyrimidine phosphate (HMP-P) moiety of thiamine from aminoimidazole ribotide (AIR) in a radical S-adenosyl-L-methionine (SAM)-dependent reaction. The chain is Phosphomethylpyrimidine synthase from Bartonella tribocorum (strain CIP 105476 / IBS 506).